The primary structure comprises 232 residues: uncharacterized protein (232 aa).

The first 18 residues, 1–18 (MGILKSLFTLGKSFISQA), serve as a signal peptide directing secretion. The segment at 207–232 (AEAGIGGSNKSSAQDVLARLQRQQGE) is disordered.

This sequence belongs to the PspA/Vipp/IM30 family.

This is an uncharacterized protein from Escherichia coli O6:H1 (strain CFT073 / ATCC 700928 / UPEC).